Reading from the N-terminus, the 447-residue chain is Chromosomal replication initiator protein DnaA (447 aa).

Positions 1 to 66 are domain I, interacts with DnaA modulators; sequence MSNRIISILK…SKAIKEAYGK (66 aa). A domain II region spans residues 66 to 102; the sequence is KNLDYEIVYETTEPEAFNKSNESYKGPLVKKKPLLIS. The interval 103 to 319 is domain III, AAA+ region; that stretch reads NLNANYTFEN…GVIIKLIVQS (217 aa). ATP contacts are provided by G146, G148, K149, and T150. A domain IV, binds dsDNA region spans residues 320 to 447; sequence SINKERIGAA…NTMATSSAAG (128 aa).

The protein belongs to the DnaA family. Oligomerizes as a right-handed, spiral filament on DNA at oriC.

It localises to the cytoplasm. Plays an essential role in the initiation and regulation of chromosomal replication. ATP-DnaA binds to the origin of replication (oriC) to initiate formation of the DNA replication initiation complex once per cell cycle. Binds the DnaA box (a 9 base pair repeat at the origin) and separates the double-stranded (ds)DNA. Forms a right-handed helical filament on oriC DNA; dsDNA binds to the exterior of the filament while single-stranded (ss)DNA is stabiized in the filament's interior. The ATP-DnaA-oriC complex binds and stabilizes one strand of the AT-rich DNA unwinding element (DUE), permitting loading of DNA polymerase. After initiation quickly degrades to an ADP-DnaA complex that is not apt for DNA replication. Binds acidic phospholipids. The chain is Chromosomal replication initiator protein DnaA from Kosmotoga olearia (strain ATCC BAA-1733 / DSM 21960 / TBF 19.5.1).